A 448-amino-acid chain; its full sequence is Exodeoxyribonuclease 7 large subunit (448 aa).

Belongs to the XseA family. As to quaternary structure, heterooligomer composed of large and small subunits.

The protein resides in the cytoplasm. It carries out the reaction Exonucleolytic cleavage in either 5'- to 3'- or 3'- to 5'-direction to yield nucleoside 5'-phosphates.. Bidirectionally degrades single-stranded DNA into large acid-insoluble oligonucleotides, which are then degraded further into small acid-soluble oligonucleotides. The chain is Exodeoxyribonuclease 7 large subunit from Alcanivorax borkumensis (strain ATCC 700651 / DSM 11573 / NCIMB 13689 / SK2).